The chain runs to 216 residues: Somatotropin (216 aa).

The signal sequence occupies residues 1–26 (MAAGPRNSMLLVFALLSLPWPQEVGA). Residue His-45 coordinates Zn(2+). Residues Cys-78 and Cys-189 are joined by a disulfide bond. Ser-131 is modified (phosphoserine). Residue Glu-198 participates in Zn(2+) binding. A disulfide bridge links Cys-206 with Cys-214.

The protein belongs to the somatotropin/prolactin family.

Its subcellular location is the secreted. Plays an important role in growth control. Its major role in stimulating body growth is to stimulate the liver and other tissues to secrete IGF1. It stimulates both the differentiation and proliferation of myoblasts. It also stimulates amino acid uptake and protein synthesis in muscle and other tissues. The sequence is that of Somatotropin (GH1) from Neovison vison (American mink).